We begin with the raw amino-acid sequence, 310 residues long: Aspartate carbamoyltransferase catalytic subunit (310 aa).

Residues R58 and T59 each contribute to the carbamoyl phosphate site. Residue K86 coordinates L-aspartate. R108, H137, and Q140 together coordinate carbamoyl phosphate. 2 residues coordinate L-aspartate: R170 and R225. G264 and P265 together coordinate carbamoyl phosphate.

The protein belongs to the aspartate/ornithine carbamoyltransferase superfamily. ATCase family. As to quaternary structure, heterododecamer (2C3:3R2) of six catalytic PyrB chains organized as two trimers (C3), and six regulatory PyrI chains organized as three dimers (R2).

It catalyses the reaction carbamoyl phosphate + L-aspartate = N-carbamoyl-L-aspartate + phosphate + H(+). The protein operates within pyrimidine metabolism; UMP biosynthesis via de novo pathway; (S)-dihydroorotate from bicarbonate: step 2/3. In terms of biological role, catalyzes the condensation of carbamoyl phosphate and aspartate to form carbamoyl aspartate and inorganic phosphate, the committed step in the de novo pyrimidine nucleotide biosynthesis pathway. In Coxiella burnetii (strain CbuG_Q212) (Coxiella burnetii (strain Q212)), this protein is Aspartate carbamoyltransferase catalytic subunit.